A 238-amino-acid polypeptide reads, in one-letter code: Uridylate kinase (238 aa).

12-15 (KVSG) lines the ATP pocket. Position 54 (glycine 54) interacts with UMP. Glycine 55 and arginine 59 together coordinate ATP. UMP contacts are provided by residues aspartate 74 and 135–142 (TGNPYFTT). ATP contacts are provided by threonine 162, asparagine 163, tyrosine 168, and aspartate 171.

This sequence belongs to the UMP kinase family. As to quaternary structure, homohexamer.

The protein localises to the cytoplasm. It carries out the reaction UMP + ATP = UDP + ADP. Its pathway is pyrimidine metabolism; CTP biosynthesis via de novo pathway; UDP from UMP (UMPK route): step 1/1. With respect to regulation, inhibited by UTP. Functionally, catalyzes the reversible phosphorylation of UMP to UDP. This is Uridylate kinase from Azorhizobium caulinodans (strain ATCC 43989 / DSM 5975 / JCM 20966 / LMG 6465 / NBRC 14845 / NCIMB 13405 / ORS 571).